Reading from the N-terminus, the 484-residue chain is 6-phosphogluconate dehydrogenase, decarboxylating (484 aa).

Residues glycine 11–glycine 16, asparagine 34–threonine 36, valine 76–alanine 78, and asparagine 104 contribute to the NADP(+) site. Substrate is bound by residues asparagine 104 and serine 130 to glycine 132. Lysine 185 functions as the Proton acceptor in the catalytic mechanism. Histidine 188 to asparagine 189 contacts substrate. Glutamate 192 (proton donor) is an active-site residue. Residues tyrosine 193, lysine 262, arginine 289, arginine 447, and histidine 453 each contribute to the substrate site.

The protein belongs to the 6-phosphogluconate dehydrogenase family. Homodimer.

The enzyme catalyses 6-phospho-D-gluconate + NADP(+) = D-ribulose 5-phosphate + CO2 + NADPH. It functions in the pathway carbohydrate degradation; pentose phosphate pathway; D-ribulose 5-phosphate from D-glucose 6-phosphate (oxidative stage): step 3/3. In terms of biological role, catalyzes the oxidative decarboxylation of 6-phosphogluconate to ribulose 5-phosphate and CO(2), with concomitant reduction of NADP to NADPH. This is 6-phosphogluconate dehydrogenase, decarboxylating (gnd) from Haemophilus influenzae (strain ATCC 51907 / DSM 11121 / KW20 / Rd).